An 899-amino-acid chain; its full sequence is Putative lipoxygenase 5 (899 aa).

3 disordered regions span residues Ala15–Ala34, Ala48–Ala68, and Val258–Ser291. The 137-residue stretch at Ala68 to Ser204 folds into the PLAT domain. Residues Pro207–Ile899 enclose the Lipoxygenase domain. Fe cation contacts are provided by His559, His564, His751, Asn755, and Ile899.

Belongs to the lipoxygenase family. The cofactor is Fe cation.

The catalysed reaction is (9Z,12Z)-octadecadienoate + O2 = (13S)-hydroperoxy-(9Z,11E)-octadecadienoate. It carries out the reaction (9Z,12Z,15Z)-octadecatrienoate + O2 = (13S)-hydroperoxy-(9Z,11E,15Z)-octadecatrienoate. Its pathway is lipid metabolism; oxylipin biosynthesis. Its function is as follows. Plant lipoxygenase may be involved in a number of diverse aspects of plant physiology including growth and development, pest resistance, and senescence or responses to wounding. Catalyzes the hydroperoxidation of lipids containing a cis,cis-1,4-pentadiene structure. The chain is Putative lipoxygenase 5 from Oryza sativa subsp. japonica (Rice).